Consider the following 488-residue polypeptide: RuvB-like helicase 1 (488 aa).

Over residues methionine 1 to methionine 11 the composition is skewed to polar residues. The disordered stretch occupies residues methionine 1 to glutamate 29. Glycine 87–threonine 94 lines the ATP pocket.

It belongs to the RuvB family. May form heterododecamers with RVB2. Component of the SWR1 chromatin remodeling complex, the INO80 chromatin remodeling complex, and of the R2TP complex.

The protein localises to the nucleus. The enzyme catalyses ATP + H2O = ADP + phosphate + H(+). DNA helicase which participates in several chromatin remodeling complexes, including the SWR1 and the INO80 complexes. The SWR1 complex mediates the ATP-dependent exchange of histone H2A for the H2A variant HZT1 leading to transcriptional regulation of selected genes by chromatin remodeling. The INO80 complex remodels chromatin by shifting nucleosomes and is involved in DNA repair. Also involved in pre-rRNA processing. This chain is RuvB-like helicase 1 (RVB1), found in Mycosarcoma maydis (Corn smut fungus).